The sequence spans 320 residues: o-succinylbenzoate synthase (320 aa).

Catalysis depends on Lys-133, which acts as the Proton donor. Mg(2+)-binding residues include Asp-161, Glu-190, and Asp-213. Lys-235 acts as the Proton acceptor in catalysis.

The protein belongs to the mandelate racemase/muconate lactonizing enzyme family. MenC type 1 subfamily. A divalent metal cation serves as cofactor.

It carries out the reaction (1R,6R)-6-hydroxy-2-succinyl-cyclohexa-2,4-diene-1-carboxylate = 2-succinylbenzoate + H2O. Its pathway is quinol/quinone metabolism; 1,4-dihydroxy-2-naphthoate biosynthesis; 1,4-dihydroxy-2-naphthoate from chorismate: step 4/7. It functions in the pathway quinol/quinone metabolism; menaquinone biosynthesis. Its function is as follows. Converts 2-succinyl-6-hydroxy-2,4-cyclohexadiene-1-carboxylate (SHCHC) to 2-succinylbenzoate (OSB). The protein is o-succinylbenzoate synthase of Escherichia coli O81 (strain ED1a).